The sequence spans 248 residues: 1-(5-phosphoribosyl)-5-[(5-phosphoribosylamino)methylideneamino] imidazole-4-carboxamide isomerase (248 aa).

The active-site Proton acceptor is Asp8. Asp131 (proton donor) is an active-site residue.

The protein belongs to the HisA/HisF family.

The protein localises to the cytoplasm. The catalysed reaction is 1-(5-phospho-beta-D-ribosyl)-5-[(5-phospho-beta-D-ribosylamino)methylideneamino]imidazole-4-carboxamide = 5-[(5-phospho-1-deoxy-D-ribulos-1-ylimino)methylamino]-1-(5-phospho-beta-D-ribosyl)imidazole-4-carboxamide. The protein operates within amino-acid biosynthesis; L-histidine biosynthesis; L-histidine from 5-phospho-alpha-D-ribose 1-diphosphate: step 4/9. The sequence is that of 1-(5-phosphoribosyl)-5-[(5-phosphoribosylamino)methylideneamino] imidazole-4-carboxamide isomerase from Cupriavidus necator (strain ATCC 17699 / DSM 428 / KCTC 22496 / NCIMB 10442 / H16 / Stanier 337) (Ralstonia eutropha).